Here is a 565-residue protein sequence, read N- to C-terminus: FAD-linked oxidoreductase ZEB1 (565 aa).

Residues 1 to 27 (MKLSPSKYLPVLLGTLSLTIANPSADC) form the signal peptide. Residues Asn46, Asn82, and Asn100 are each glycosylated (N-linked (GlcNAc...) asparagine). One can recognise an FAD-binding PCMH-type domain in the interval 115–293 (LGNYVSYAIA…ISMTVKAHPG (179 aa)). Residues Asn340, Asn352, and Asn421 are each glycosylated (N-linked (GlcNAc...) asparagine).

The protein belongs to the oxygen-dependent FAD-linked oxidoreductase family.

The protein operates within mycotoxin biosynthesis. FAD-linked oxidoreductase; part of the gene cluster that mediates the biosynthesis of zearalenone (ZEA), a nonsteroid estrogen that is a contaminant of cereal grains and causes estrogenic disorders in humans and animals. The ZEA backbone is synthesized from a single acetyl-CoA molecule and eight malonyl-CoA molecules. The reducing polyketide synthase ZEA2 is proposed to synthesize a reduced hexaketide intermediate by using different combinations of its reductive domains during each round of condensation. The hexaketide thioester is then transacylated to the non-reducing polyketide synthase ZEA1 and is further condensed with three malonyl-CoAs without reductive tailoring to yield a mixed reduced/unreduced nonaketide. ZEA1 must be able to interact with ZEA2 to facilitate starter-unit acyltransfer and initiate polyketide biosynthesis. ZEA1 also mediates the required C2-C7 cyclization to form the resorcylate core and catalyzes the formation of the macrolactone. ZEB1 is then responsible for the chemical conversion of beta-zearalenonol (beta-ZOL) to ZEA in the biosynthetic pathway. The polypeptide is FAD-linked oxidoreductase ZEB1 (Gibberella zeae (strain ATCC MYA-4620 / CBS 123657 / FGSC 9075 / NRRL 31084 / PH-1) (Wheat head blight fungus)).